The following is a 180-amino-acid chain: ATP-dependent protease subunit HslV (180 aa).

The active site involves Thr-2. Na(+) contacts are provided by Gly-157, Cys-160, and Ser-163.

It belongs to the peptidase T1B family. HslV subfamily. A double ring-shaped homohexamer of HslV is capped on each side by a ring-shaped HslU homohexamer. The assembly of the HslU/HslV complex is dependent on binding of ATP.

Its subcellular location is the cytoplasm. The catalysed reaction is ATP-dependent cleavage of peptide bonds with broad specificity.. Its activity is regulated as follows. Allosterically activated by HslU binding. Protease subunit of a proteasome-like degradation complex believed to be a general protein degrading machinery. This chain is ATP-dependent protease subunit HslV, found in Wigglesworthia glossinidia brevipalpis.